The chain runs to 310 residues: Small ribosomal subunit biogenesis GTPase RsgA (310 aa).

Positions 77 to 238 constitute a CP-type G domain; sequence LSKQSHILAA…IIDTPGIKGF (162 aa). Residues 126–129 and 180–188 each bind GTP; these read NKTD and GNSGVGKST. Zn(2+)-binding residues include C262, C267, H269, and C275.

Belongs to the TRAFAC class YlqF/YawG GTPase family. RsgA subfamily. In terms of assembly, monomer. Associates with 30S ribosomal subunit, binds 16S rRNA. Zn(2+) is required as a cofactor.

The protein resides in the cytoplasm. One of several proteins that assist in the late maturation steps of the functional core of the 30S ribosomal subunit. Helps release RbfA from mature subunits. May play a role in the assembly of ribosomal proteins into the subunit. Circularly permuted GTPase that catalyzes slow GTP hydrolysis, GTPase activity is stimulated by the 30S ribosomal subunit. In Phocaeicola vulgatus (strain ATCC 8482 / DSM 1447 / JCM 5826 / CCUG 4940 / NBRC 14291 / NCTC 11154) (Bacteroides vulgatus), this protein is Small ribosomal subunit biogenesis GTPase RsgA.